The following is an 82-amino-acid chain: Acyl carrier protein (82 aa).

A Carrier domain is found at 2–77 (DNVADRVKKV…QAIDYVSAHI (76 aa)). The residue at position 37 (Ser37) is an O-(pantetheine 4'-phosphoryl)serine.

This sequence belongs to the acyl carrier protein (ACP) family. Post-translationally, 4'-phosphopantetheine is transferred from CoA to a specific serine of apo-ACP by AcpS. This modification is essential for activity because fatty acids are bound in thioester linkage to the sulfhydryl of the prosthetic group.

It localises to the cytoplasm. It participates in lipid metabolism; fatty acid biosynthesis. In terms of biological role, carrier of the growing fatty acid chain in fatty acid biosynthesis. In Acidithiobacillus ferrooxidans (strain ATCC 23270 / DSM 14882 / CIP 104768 / NCIMB 8455) (Ferrobacillus ferrooxidans (strain ATCC 23270)), this protein is Acyl carrier protein.